The following is a 609-amino-acid chain: Chloride channel CLIC-like protein 1 (609 aa).

The first 25 residues, 1 to 25 (MKLSSSSSFGLCILVVFFCFVVIES), serve as a signal peptide directing secretion. 3 helical membrane passes run 212-235 (VSLI…SWFV), 241-260 (FAVS…YMLA), and 358-380 (VTLQ…YGSA). The tract at residues 398–553 (EQPPPAVGQR…PSSIDVKTVG (156 aa)) is disordered. 2 stretches are compositionally biased toward basic and acidic residues: residues 454-474 (ENRE…KRTP) and 507-537 (EEVK…DRSE). The segment covering 538–547 (PITSEPPSSI) has biased composition (low complexity).

This sequence belongs to the chloride channel MCLC family. In terms of tissue distribution, expressed in the hindbrain, swim bladder and the eye at 1 day post fertilization (dpf) with increased expression at 3 dpf. At 3 dpf, most prominent expression in the retina, with strong expression in the ganglion cell layer, outer nuclear layer and the retinal pigmented epithelium.

The protein resides in the endoplasmic reticulum membrane. Its subcellular location is the golgi apparatus membrane. It localises to the nucleus membrane. In terms of biological role, seems to act as a chloride ion channel. Plays a role in retina development. The sequence is that of Chloride channel CLIC-like protein 1 from Danio rerio (Zebrafish).